We begin with the raw amino-acid sequence, 131 residues long: Small ribosomal subunit protein uS8 (131 aa).

Belongs to the universal ribosomal protein uS8 family. In terms of assembly, part of the 30S ribosomal subunit. Contacts proteins S5 and S12.

Its function is as follows. One of the primary rRNA binding proteins, it binds directly to 16S rRNA central domain where it helps coordinate assembly of the platform of the 30S subunit. The protein is Small ribosomal subunit protein uS8 of Dictyoglomus turgidum (strain DSM 6724 / Z-1310).